The sequence spans 120 residues: cAMP-responsive element-binding protein-like 2 (120 aa).

The segment at 1–24 (MDDSKVVGGKVKKPGKRGRKPAKI) is disordered. The span at 10–21 (KVKKPGKRGRKP) shows a compositional bias: basic residues. The 64-residue stretch at 23 to 86 (KIDLKAKLER…MAMDQGKIPS (64 aa)) folds into the bZIP domain. The basic motif stretch occupies residues 29-60 (KLERSRQSARECRARKKLRYQYLEELVSSRER). The segment at 62–69 (ICALREEL) is leucine-zipper. Residues 93–120 (TGEEQSKSQQNSSRHMKAGKTDANSNSW) form a disordered region.

The protein belongs to the bZIP family. ATF subfamily. In terms of assembly, interacts with CREB1; regulates CREB1 phosphorylation, stability and transcriptional activity. Interacts with immediate-early (IE) protein BICP22 of bovine herpesvirus-1 (BHV-1). In terms of processing, phosphorylated by AMPK.

The protein localises to the nucleus. In terms of biological role, probable regulator of CREB1 transcriptional activity which is involved in adipose cells differentiation. May also play a regulatory role in the cell cycle. This Bos taurus (Bovine) protein is cAMP-responsive element-binding protein-like 2 (CREBL2).